Consider the following 303-residue polypeptide: Carboxypeptidase B (303 aa).

The 294-residue stretch at 5–298 (SYHDYDEINA…EGVKVVANFV (294 aa)) folds into the Peptidase M14 domain. Positions 63 and 66 each coordinate Zn(2+). Substrate contacts are provided by residues 63 to 66 (HARE), Arg-118, and 136 to 137 (NR). Zn(2+) is bound at residue His-189. Substrate contacts are provided by residues 190–191 (SY) and Tyr-241. Glu-264 (proton donor/acceptor) is an active-site residue.

Belongs to the peptidase M14 family. Zn(2+) is required as a cofactor.

The protein resides in the secreted. It catalyses the reaction Preferential release of a C-terminal lysine or arginine amino acid.. The chain is Carboxypeptidase B from Astacus astacus (Noble crayfish).